The primary structure comprises 113 residues: Nucleoid-associated protein ROP_41370 (113 aa).

This sequence belongs to the YbaB/EbfC family. In terms of assembly, homodimer.

It localises to the cytoplasm. It is found in the nucleoid. Its function is as follows. Binds to DNA and alters its conformation. May be involved in regulation of gene expression, nucleoid organization and DNA protection. The sequence is that of Nucleoid-associated protein ROP_41370 from Rhodococcus opacus (strain B4).